A 764-amino-acid chain; its full sequence is 5-methyltetrahydropteroyltriglutamate--homocysteine methyltransferase (764 aa).

5-methyltetrahydropteroyltri-L-glutamate-binding positions include 16 to 19 and lysine 115; that span reads RELK. L-homocysteine is bound by residues 435-437 and glutamate 488; that span reads IGS. L-methionine-binding positions include 435–437 and glutamate 488; that span reads IGS. 5-methyltetrahydropteroyltri-L-glutamate-binding positions include 519 to 520 and tryptophan 565; that span reads RC. An L-homocysteine-binding site is contributed by aspartate 603. Residue aspartate 603 participates in L-methionine binding. Glutamate 609 contributes to the 5-methyltetrahydropteroyltri-L-glutamate binding site. Zn(2+) is bound by residues histidine 645, cysteine 647, and glutamate 669. Residue histidine 698 is the Proton donor of the active site. Cysteine 730 serves as a coordination point for Zn(2+).

This sequence belongs to the vitamin-B12 independent methionine synthase family. The cofactor is Zn(2+).

The catalysed reaction is 5-methyltetrahydropteroyltri-L-glutamate + L-homocysteine = tetrahydropteroyltri-L-glutamate + L-methionine. The protein operates within amino-acid biosynthesis; L-methionine biosynthesis via de novo pathway; L-methionine from L-homocysteine (MetE route): step 1/1. Its function is as follows. Catalyzes the transfer of a methyl group from 5-methyltetrahydrofolate to homocysteine resulting in methionine formation. The sequence is that of 5-methyltetrahydropteroyltriglutamate--homocysteine methyltransferase from Burkholderia pseudomallei (strain 668).